A 315-amino-acid polypeptide reads, in one-letter code: Hydroxysteroid 11-beta-dehydrogenase 1-like protein (315 aa).

The first 15 residues, 1–15 (MKVLLLTGLGALFFA), serve as a signal peptide directing secretion. NADP(+) contacts are provided by residues 36–62 (GANA…TAHT), 87–88 (DM), and 114–116 (NHI). Residue S165 participates in substrate binding. Residue Y178 is the Proton acceptor of the active site. Residues 178-182 (YSAAK) and 211-217 (GLRDRAS) each bind NADP(+). A disordered region spans residues 221–286 (AVRSSTSRPR…SKTEKNDGHL (66 aa)). A compositionally biased stretch (basic and acidic residues) spans 277–286 (SKTEKNDGHL).

It belongs to the short-chain dehydrogenases/reductases (SDR) family. In terms of tissue distribution, highly expressed in the brain.

It localises to the secreted. The catalysed reaction is cortisone + NADPH + H(+) = cortisol + NADP(+). In terms of biological role, unidirectional NADP(+)-dependent cortisol dehydrogenase (in vitro). This is Hydroxysteroid 11-beta-dehydrogenase 1-like protein (HSD11B1L) from Homo sapiens (Human).